Consider the following 562-residue polypeptide: Dihydroxy-acid dehydratase (562 aa).

Mg(2+) is bound at residue D80. C121 is a binding site for [2Fe-2S] cluster. D122 and K123 together coordinate Mg(2+). Position 123 is an N6-carboxylysine (K123). C194 is a binding site for [2Fe-2S] cluster. Residue E446 participates in Mg(2+) binding. The active-site Proton acceptor is S472.

This sequence belongs to the IlvD/Edd family. Homodimer. Requires [2Fe-2S] cluster as cofactor. Mg(2+) serves as cofactor.

The enzyme catalyses (2R)-2,3-dihydroxy-3-methylbutanoate = 3-methyl-2-oxobutanoate + H2O. It carries out the reaction (2R,3R)-2,3-dihydroxy-3-methylpentanoate = (S)-3-methyl-2-oxopentanoate + H2O. Its pathway is amino-acid biosynthesis; L-isoleucine biosynthesis; L-isoleucine from 2-oxobutanoate: step 3/4. The protein operates within amino-acid biosynthesis; L-valine biosynthesis; L-valine from pyruvate: step 3/4. Functions in the biosynthesis of branched-chain amino acids. Catalyzes the dehydration of (2R,3R)-2,3-dihydroxy-3-methylpentanoate (2,3-dihydroxy-3-methylvalerate) into 2-oxo-3-methylpentanoate (2-oxo-3-methylvalerate) and of (2R)-2,3-dihydroxy-3-methylbutanoate (2,3-dihydroxyisovalerate) into 2-oxo-3-methylbutanoate (2-oxoisovalerate), the penultimate precursor to L-isoleucine and L-valine, respectively. The protein is Dihydroxy-acid dehydratase of Staphylococcus aureus (strain MRSA252).